A 438-amino-acid polypeptide reads, in one-letter code: Mannan endo-1,4-beta-mannosidase F (438 aa).

An N-terminal signal peptide occupies residues 1-17 (MHPLPSVALLSAIGAVA). One can recognise a CBM1 domain in the interval 19 to 54 (QVGPWGQCGGRSYTGETSCVSGWSCVLFNEWYSQCQ). Positions 60–96 (STSSVSATAAPSSTSSSKESVPSATTSKKPVPTGSSS) are ser-rich linker. Residues 61–86 (TSSVSATAAPSSTSSSKESVPSATTS) show a composition bias toward low complexity. The segment at 61–92 (TSSVSATAAPSSTSSSKESVPSATTSKKPVPT) is disordered. The tract at residues 97-438 (FVKADGLKFN…CGVADHLSTL (342 aa)) is catalytic. Substrate-binding residues include Trp149 and Asn263. Catalysis depends on Glu264, which acts as the Proton donor. Residue Asn277 is glycosylated (N-linked (GlcNAc...) asparagine). Residue Tyr339 coordinates substrate. Catalysis depends on Glu373, which acts as the Nucleophile. Substrate is bound at residue Trp402.

The protein belongs to the glycosyl hydrolase 5 (cellulase A) family.

It localises to the secreted. The enzyme catalyses Random hydrolysis of (1-&gt;4)-beta-D-mannosidic linkages in mannans, galactomannans and glucomannans.. Endo-1,4-mannanase, a crucial enzyme for depolymerization of seed galactomannans and wood galactoglucomannans. The chain is Mannan endo-1,4-beta-mannosidase F (manF) from Aspergillus fumigatus (strain ATCC MYA-4609 / CBS 101355 / FGSC A1100 / Af293) (Neosartorya fumigata).